The chain runs to 67 residues: MWRIWRLFDPMRAMVAQAVFLLGLAVLIHLMLLGTNKYNWLDGAKKAPVATAVAPVPAEVTSLAQAK.

Topologically, residues 1-12 are cytoplasmic; sequence MWRIWRLFDPMR. A helical membrane pass occupies residues 13 to 33; that stretch reads AMVAQAVFLLGLAVLIHLMLL. His29 is an a bacteriochlorophyll binding site. Residues 34–67 lie on the Periplasmic side of the membrane; sequence GTNKYNWLDGAKKAPVATAVAPVPAEVTSLAQAK.

It belongs to the antenna complex alpha subunit family. An alpha/beta heterodimer. The core complex is formed by different alpha and beta chains, binding bacteriochlorophyll molecules, and arranged most probably in tetrameric structures disposed around the reaction center. The non-pigmented gamma chains may constitute additional components.

The protein resides in the cell inner membrane. Antenna complexes are light-harvesting systems, which transfer the excitation energy to the reaction centers. The polypeptide is Light-harvesting protein B-870 alpha chain (pufA) (Rubrivivax gelatinosus (strain NBRC 100245 / IL144)).